A 457-amino-acid polypeptide reads, in one-letter code: Argininosuccinate lyase (457 aa).

This sequence belongs to the lyase 1 family. Argininosuccinate lyase subfamily.

The protein localises to the cytoplasm. It catalyses the reaction 2-(N(omega)-L-arginino)succinate = fumarate + L-arginine. The protein operates within amino-acid biosynthesis; L-arginine biosynthesis; L-arginine from L-ornithine and carbamoyl phosphate: step 3/3. The polypeptide is Argininosuccinate lyase (Shigella sonnei (strain Ss046)).